The chain runs to 154 residues: Ribonuclease H (154 aa).

In terms of domain architecture, RNase H type-1 spans 1-142 (MRKQVEIFTD…CDELARAAAS (142 aa)). Residues Asp10, Glu48, Asp70, and Asp134 each contribute to the Mg(2+) site.

Belongs to the RNase H family. As to quaternary structure, monomer. It depends on Mg(2+) as a cofactor.

Its subcellular location is the cytoplasm. It carries out the reaction Endonucleolytic cleavage to 5'-phosphomonoester.. Its function is as follows. Endonuclease that specifically degrades the RNA of RNA-DNA hybrids. The polypeptide is Ribonuclease H (Pectobacterium atrosepticum (strain SCRI 1043 / ATCC BAA-672) (Erwinia carotovora subsp. atroseptica)).